A 2035-amino-acid chain; its full sequence is Proline-rich protein 12 (2035 aa).

Disordered regions lie at residues 210-280, 292-311, 329-584, and 645-685; these read GGGV…ERAL, RPAS…LQHY, CSPL…GAPG, and QAPS…GTPY. Pro residues predominate over residues 223–240; it reads QTPPYRPGPPDPPPPPRH. Over residues 249 to 261 the composition is skewed to low complexity; it reads ASSSAATAAEPSS. Positions 296–305 are enriched in pro residues; that stretch reads AQPPPPPPPA. Phosphoserine is present on residues S330 and S338. A compositionally biased stretch (low complexity) spans 338 to 364; sequence SPGAGEPSKGGPSGATAGAAGRATGPE. The segment covering 365–377 has biased composition (gly residues); it reads TAGGGAAGGGGGY. 2 stretches are compositionally biased toward low complexity: residues 408–429 and 437–455; these read STAT…AGKA and SQAY…QAYG. A compositionally biased stretch (pro residues) spans 476-487; that stretch reads PPQPPSGPPPPG. Composition is skewed to polar residues over residues 490–501 and 520–534; these read TCQSYSPDQLQG and GLPT…STGH. The span at 540–555 shows a compositional bias: gly residues; the sequence is GHGGGWGPSSLGGGGE. Phosphoserine is present on S648. The span at 670-681 shows a compositional bias: gly residues; sequence GLGGSGGAGGAP. The residue at position 735 (T735) is a Phosphothreonine. Disordered regions lie at residues 755-844, 851-870, 879-920, and 946-1061; these read AFLQ…PLQL, HGLE…SLEP, GALE…APRF, and EMFG…CSTK. Residues 830-841 are compositionally biased toward pro residues; sequence PQPPPPPPPPMP. Phosphoserine is present on S859. The span at 1031-1046 shows a compositional bias: pro residues; the sequence is SAPPPPPPPPPPPPVS. 2 positions are modified to phosphoserine: S1070 and S1128. Disordered regions lie at residues 1112–1244, 1288–1355, 1367–1567, and 1662–1839; these read RRLP…DHNS, PLYQ…SPCK, TLPS…GEGI, and HRPP…PGRL. Residues 1190–1199 show a composition bias toward basic residues; the sequence is KPRGRGRGRG. Residues 1200–1214 show a composition bias toward basic and acidic residues; the sequence is RKAEEMGGTRLEPLK. Residue K1214 is modified to N6-acetyllysine. Residue T1295 is modified to Phosphothreonine. S1299 bears the Phosphoserine mark. The segment covering 1314–1329 has biased composition (pro residues); it reads QPPPPTVPTVPHPAPS. Residues S1372, S1373, and S1378 each carry the phosphoserine modification. Over residues 1449-1529 the composition is skewed to pro residues; the sequence is PPTPPPAPTP…PPEEPPAPSP (81 aa). Residues 1535–1547 are compositionally biased toward basic and acidic residues; that stretch reads PDARPLHLAKKQE. At T1555 the chain carries Phosphothreonine. A Phosphoserine modification is found at S1562. Residues 1698–1709 show a composition bias toward basic and acidic residues; that stretch reads ETPEKMTSEKPP. T1699 is subject to Phosphothreonine. Positions 1710–1730 are enriched in pro residues; that stretch reads EPAPEPAVPEPPAPEKPSPPR. Basic and acidic residues predominate over residues 1731–1768; sequence PVEKEKEKEKEKEKEKERVTRPLRSERATSGRQMRTDR. Residues 1769–1779 are compositionally biased toward polar residues; the sequence is SLATGQSTTSR. Positions 1817 to 1828 are enriched in low complexity; the sequence is SSSDSESSPGAP. The residue at position 1924 (S1924) is a Phosphoserine.

As to expression, expressed in brain.

The protein resides in the nucleus. It localises to the postsynaptic density. It is found in the synapse. The protein localises to the synaptosome. This chain is Proline-rich protein 12, found in Mus musculus (Mouse).